A 391-amino-acid polypeptide reads, in one-letter code: 5-amino-6-(D-ribitylamino)uracil--L-tyrosine 4-hydroxyphenyl transferase (391 aa).

Positions 55-302 (VTYVINRNIN…GAVARIYLGN (248 aa)) constitute a Radical SAM core domain. Positions 69, 73, and 76 each coordinate [4Fe-4S] cluster.

Belongs to the radical SAM superfamily. CofH family. As to quaternary structure, consists of two subunits, CofG and CofH. It depends on [4Fe-4S] cluster as a cofactor.

It catalyses the reaction 5-amino-6-(D-ribitylamino)uracil + L-tyrosine + S-adenosyl-L-methionine = 5-amino-5-(4-hydroxybenzyl)-6-(D-ribitylimino)-5,6-dihydrouracil + 2-iminoacetate + 5'-deoxyadenosine + L-methionine + H(+). It functions in the pathway cofactor biosynthesis; coenzyme F0 biosynthesis. Catalyzes the radical-mediated synthesis of 5-amino-5-(4-hydroxybenzyl)-6-(D-ribitylimino)-5,6-dihydrouracil from 5-amino-6-(D-ribitylamino)uracil and L-tyrosine. This chain is 5-amino-6-(D-ribitylamino)uracil--L-tyrosine 4-hydroxyphenyl transferase, found in Nostoc sp. (strain PCC 7120 / SAG 25.82 / UTEX 2576).